Reading from the N-terminus, the 520-residue chain is Cyclic AMP-responsive element-binding protein 3-like protein 2 (520 aa).

The Cytoplasmic segment spans residues 1–378 (MEVLESGEQG…CKLAGTQTGT (378 aa)). At Ser93 the chain carries Phosphoserine. Residue Lys178 forms a Glycyl lysine isopeptide (Lys-Gly) (interchain with G-Cter in SUMO2) linkage. At Ser191 the chain carries Phosphoserine. Positions 195–264 (APVDHLHLPP…PHKLQGSGPL (70 aa)) are disordered. Composition is skewed to low complexity over residues 208–220 (SSHG…SLSP) and 234–255 (SPSR…LTAP). The bZIP domain maps to 294–357 (ALKKIRRKIK…RTLLQQLQKL (64 aa)). Positions 296 to 325 (KKIRRKIKNKISAQESRRKKKEYMDSLEKK) are basic motif. Positions 336 to 357 (LRKKVEVLENTNRTLLQQLQKL) are leucine-zipper. The chain crosses the membrane as a helical; Signal-anchor for type II membrane protein span at residues 379-399 (CLMVVVLCFAVAFGSFFQGYG). The Lumenal segment spans residues 400-520 (PYPSATKMAL…ELDRRVNTTF (121 aa)). An S1P recognition motif is present at residues 427–430 (RNLL). 3 N-linked (GlcNAc...) asparagine glycosylation sites follow: Asn480, Asn504, and Asn517.

Belongs to the bZIP family. ATF subfamily. As to quaternary structure, binds DNA as a dimer. Post-translationally, upon ER stress, translocated to the Golgi apparatus, where it is processed by regulated intramembrane proteolysis (RIP) to release the cytosol-facing N-terminal transcription factor domain. The cleavage is performed sequentially by site-1 and site-2 proteases (S1P/MBTPS1 and S2P/MBTPS2). In terms of processing, N-glycosylated. Ubiquitinated by HRD1/SYVN1; undergoes 'Lys-48'-linked ubiquitination, followed by rapid proteasomal degradation under normal conditions. Upon ER stress, SYVN1 E3 ubiquitin-protein ligase dissociates from its substrate, ubiquitination does not occur and CREB3L2 is stabilized.

The protein localises to the endoplasmic reticulum membrane. The protein resides in the nucleus. Transcription factor involved in unfolded protein response (UPR). In the absence of endoplasmic reticulum (ER) stress, inserted into ER membranes, with N-terminal DNA-binding and transcription activation domains oriented toward the cytosolic face of the membrane. In response to ER stress, transported to the Golgi, where it is cleaved in a site-specific manner by resident proteases S1P/MBTPS1 and S2P/MBTPS2. The released N-terminal cytosolic domain is translocated to the nucleus to effect transcription of specific target genes. Plays a critical role in chondrogenesis by activating the transcription of SEC23A, which promotes the transport and secretion of cartilage matrix proteins, and possibly that of ER biogenesis-related genes. In a neuroblastoma cell line, protects cells from ER stress-induced death. In vitro activates transcription of target genes via direct binding to the CRE site. The polypeptide is Cyclic AMP-responsive element-binding protein 3-like protein 2 (CREB3L2) (Pongo abelii (Sumatran orangutan)).